A 283-amino-acid chain; its full sequence is Thymidylate synthase (283 aa).

Arg22 contacts dUMP. The Nucleophile role is filled by Cys160. DUMP-binding positions include 180–183 (RSCD), Asn191, and 221–223 (HIY). Residue Asp183 coordinates (6R)-5,10-methylene-5,6,7,8-tetrahydrofolate. Residue Ser282 participates in (6R)-5,10-methylene-5,6,7,8-tetrahydrofolate binding.

This sequence belongs to the thymidylate synthase family. Bacterial-type ThyA subfamily. In terms of assembly, homodimer.

The protein resides in the cytoplasm. It catalyses the reaction dUMP + (6R)-5,10-methylene-5,6,7,8-tetrahydrofolate = 7,8-dihydrofolate + dTMP. It participates in pyrimidine metabolism; dTTP biosynthesis. Functionally, catalyzes the reductive methylation of 2'-deoxyuridine-5'-monophosphate (dUMP) to 2'-deoxythymidine-5'-monophosphate (dTMP) while utilizing 5,10-methylenetetrahydrofolate (mTHF) as the methyl donor and reductant in the reaction, yielding dihydrofolate (DHF) as a by-product. This enzymatic reaction provides an intracellular de novo source of dTMP, an essential precursor for DNA biosynthesis. This Vibrio vulnificus (strain YJ016) protein is Thymidylate synthase.